Here is a 490-residue protein sequence, read N- to C-terminus: Auxin transporter-like protein 5 (490 aa).

At 1 to 55 (MEMANDKVAETVIVGNYVEMESEGKPPQDIKSKLSNFLWHGGSAYDAWFSCASNQ) the chain is on the cytoplasmic side. The helical transmembrane segment at 56-73 (VAQVLLTLPYSFSQLGML) threads the bilayer. The Extracellular segment spans residues 74-75 (SG). A helical membrane pass occupies residues 76 to 96 (ILFQLFYGILGSWTAYLISIL). Topologically, residues 97 to 132 (YVEYRTRKEREKVNFRSHVIQWFEVLDGLLGKHWRN) are cytoplasmic. Residues 133 to 153 (VGLGFNCTFLLFGSVIQLIAC) traverse the membrane as a helical segment. At 154–168 (ASNIYYINDNLDKRT) the chain is on the extracellular side. The chain crosses the membrane as a helical span at residues 169–189 (WTYIFGACCATTVFIPSFHNY). Arginine 190 is a topological domain (cytoplasmic). Residues 191–211 (IWSFLGLVMTTYTAWYLTIAA) form a helical membrane-spanning segment. Topologically, residues 212-227 (VLHGQVEGVKHSGPNK) are extracellular. Residues 228-248 (IILYFTGATNILYTFGGHAVT) traverse the membrane as a helical segment. The Cytoplasmic portion of the chain corresponds to 249–262 (VEIMHAMWKPQKFK). A helical membrane pass occupies residues 263–283 (AIYLLATLYVLTLTIPSATAV). Over 284–310 (YWAFGDMLLNHSNAFALLPKSPFRDMA) the chain is Extracellular. Asparagine 293 carries an N-linked (GlcNAc...) asparagine glycan. The helical transmembrane segment at 311 to 331 (VILMLIHQFITFGFACTPLYF) threads the bilayer. Residues 332–352 (VWEKTVGMHECKSLCKRALVR) are Cytoplasmic-facing. A helical transmembrane segment spans residues 353–373 (LPVVIPIWFLAIIFPFFGPIN). The Extracellular portion of the chain corresponds to 374-376 (STV). The helical transmembrane segment at 377–397 (GSLLVSFTVYIIPALAHIFTF) threads the bilayer. Topologically, residues 398–420 (KSSSARQNAVEQPPKFVGRWVGT) are cytoplasmic. A helical transmembrane segment spans residues 421 to 441 (FVINVFIVVWVLIVGFGFGGW). Residues 442–490 (ASMVNFVHQIDTFGLFTKCYQCPPPTPSVPTMPPHQMNATAPSPHHHHH) are Extracellular-facing. Residue asparagine 479 is glycosylated (N-linked (GlcNAc...) asparagine).

Belongs to the amino acid/polyamine transporter 2 family. Amino acid/auxin permease (AAAP) (TC 2.A.18.1) subfamily. In terms of tissue distribution, shoots and roots of nodulating plants, at low levels.

The protein resides in the cell membrane. Carrier protein involved in proton-driven auxin influx. Mediates the formation of auxin gradient from developing leaves (site of auxin biosynthesis) to tips by contributing to the loading of auxin in vascular tissues and facilitating acropetal (base to tip) auxin transport within inner tissues of the root apex, and basipetal (tip to base) auxin transport within outer tissues of the root apex. May be involved in lateral roots and nodules formation. This Medicago truncatula (Barrel medic) protein is Auxin transporter-like protein 5 (LAX5).